An 89-amino-acid polypeptide reads, in one-letter code: Small ribosomal subunit protein bS18 (89 aa).

This sequence belongs to the bacterial ribosomal protein bS18 family. Part of the 30S ribosomal subunit. Forms a tight heterodimer with protein bS6.

Its function is as follows. Binds as a heterodimer with protein bS6 to the central domain of the 16S rRNA, where it helps stabilize the platform of the 30S subunit. In Phocaeicola vulgatus (strain ATCC 8482 / DSM 1447 / JCM 5826 / CCUG 4940 / NBRC 14291 / NCTC 11154) (Bacteroides vulgatus), this protein is Small ribosomal subunit protein bS18.